The sequence spans 157 residues: Protein Smg (157 aa).

Belongs to the Smg family.

This chain is Protein Smg, found in Klebsiella pneumoniae (strain 342).